The chain runs to 324 residues: Quinolinate synthase (324 aa).

Iminosuccinate-binding residues include histidine 39 and serine 56. Cysteine 101 provides a ligand contact to [4Fe-4S] cluster. Residues 127-129 (YIN) and serine 144 contribute to the iminosuccinate site. Residue cysteine 187 participates in [4Fe-4S] cluster binding. Iminosuccinate-binding positions include 213-215 (HPE) and threonine 230. Cysteine 280 contributes to the [4Fe-4S] cluster binding site.

The protein belongs to the quinolinate synthase family. Type 2 subfamily. [4Fe-4S] cluster is required as a cofactor.

It is found in the cytoplasm. The enzyme catalyses iminosuccinate + dihydroxyacetone phosphate = quinolinate + phosphate + 2 H2O + H(+). The protein operates within cofactor biosynthesis; NAD(+) biosynthesis; quinolinate from iminoaspartate: step 1/1. Its function is as follows. Catalyzes the condensation of iminoaspartate with dihydroxyacetone phosphate to form quinolinate. This is Quinolinate synthase from Nostoc sp. (strain PCC 7120 / SAG 25.82 / UTEX 2576).